A 371-amino-acid chain; its full sequence is Neuropeptide S receptor (371 aa).

Residues 1–52 (MPANLTEGSFHANQTVPMLDSSPVACTEIVTFTEALVAEEWGSFYSSFKTEQ) are Extracellular-facing. N-linked (GlcNAc...) asparagine glycans are attached at residues Asn4 and Asn13. Residues 53-73 (LITLWVLFVVTIVGNSVVLFS) form a helical membrane-spanning segment. Residues 74–82 (TCRRKRKSR) are Cytoplasmic-facing. Residues 83–103 (MTFFVTQLAITDSFTGLINIL) traverse the membrane as a helical segment. At 104–123 (TDIIWRFTGDFMAPDLVCRV) the chain is on the extracellular side. A disulfide bond links Cys121 and Cys197. Residues 124 to 144 (VRYLQVVLLYASTYVLVSLSI) traverse the membrane as a helical segment. Topologically, residues 145-164 (DRYHAIVYPMKFLQGEKQAK) are cytoplasmic. The helical transmembrane segment at 165–185 (VLIGIAWSLSFLFSIPTLIIF) threads the bilayer. The Extracellular portion of the chain corresponds to 186-212 (GKRTLSNGEVQCWALWPDDSYWTPYMT). A helical membrane pass occupies residues 213–233 (IVAFLVYFIPLAIISVIYGLV). Residues 234-275 (IRTIWMKSKTHETVISNCSDGKLCCSYNRGLISKAKIKAIKY) lie on the Cytoplasmic side of the membrane. The chain crosses the membrane as a helical span at residues 276–296 (SIVIILAFICCWSPYFLFDIL). Over 297 to 312 (DNFNVLPDTKERFYAS) the chain is Extracellular. The chain crosses the membrane as a helical span at residues 313–333 (VIIQNLPALNSAINPLIYCIF). Over 334 to 371 (SSSICSPCKMQRSQDSRMTYRERSERHEMQILSKPEFI) the chain is Cytoplasmic.

Belongs to the G-protein coupled receptor 1 family. Vasopressin/oxytocin receptor subfamily.

It is found in the cell membrane. G-protein coupled receptor for neuropeptide S (NPS). Promotes mobilization of intracellular Ca(2+) stores. Inhibits cell growth in response to NPS binding. Involved in pathogenesis of asthma and other IgE-mediated diseases. The polypeptide is Neuropeptide S receptor (Npsr1) (Mus musculus (Mouse)).